Reading from the N-terminus, the 556-residue chain is 2-succinyl-5-enolpyruvyl-6-hydroxy-3-cyclohexene-1-carboxylate synthase (556 aa).

This sequence belongs to the TPP enzyme family. MenD subfamily. In terms of assembly, homodimer. It depends on Mg(2+) as a cofactor. Requires Mn(2+) as cofactor. Thiamine diphosphate serves as cofactor.

It catalyses the reaction isochorismate + 2-oxoglutarate + H(+) = 5-enolpyruvoyl-6-hydroxy-2-succinyl-cyclohex-3-ene-1-carboxylate + CO2. Its pathway is quinol/quinone metabolism; 1,4-dihydroxy-2-naphthoate biosynthesis; 1,4-dihydroxy-2-naphthoate from chorismate: step 2/7. The protein operates within quinol/quinone metabolism; menaquinone biosynthesis. In terms of biological role, catalyzes the thiamine diphosphate-dependent decarboxylation of 2-oxoglutarate and the subsequent addition of the resulting succinic semialdehyde-thiamine pyrophosphate anion to isochorismate to yield 2-succinyl-5-enolpyruvyl-6-hydroxy-3-cyclohexene-1-carboxylate (SEPHCHC). This Escherichia coli (strain ATCC 8739 / DSM 1576 / NBRC 3972 / NCIMB 8545 / WDCM 00012 / Crooks) protein is 2-succinyl-5-enolpyruvyl-6-hydroxy-3-cyclohexene-1-carboxylate synthase.